The following is a 291-amino-acid chain: Lipoyl synthase (291 aa).

Residues Cys-33, Cys-38, Cys-44, Cys-59, Cys-63, Cys-66, and Ser-274 each contribute to the [4Fe-4S] cluster site. In terms of domain architecture, Radical SAM core spans 45–263 (WGEGTATFLI…REAAEAMGFK (219 aa)).

Belongs to the radical SAM superfamily. Lipoyl synthase family. [4Fe-4S] cluster is required as a cofactor.

The protein resides in the cytoplasm. It carries out the reaction [[Fe-S] cluster scaffold protein carrying a second [4Fe-4S](2+) cluster] + N(6)-octanoyl-L-lysyl-[protein] + 2 oxidized [2Fe-2S]-[ferredoxin] + 2 S-adenosyl-L-methionine + 4 H(+) = [[Fe-S] cluster scaffold protein] + N(6)-[(R)-dihydrolipoyl]-L-lysyl-[protein] + 4 Fe(3+) + 2 hydrogen sulfide + 2 5'-deoxyadenosine + 2 L-methionine + 2 reduced [2Fe-2S]-[ferredoxin]. The protein operates within protein modification; protein lipoylation via endogenous pathway; protein N(6)-(lipoyl)lysine from octanoyl-[acyl-carrier-protein]: step 2/2. Catalyzes the radical-mediated insertion of two sulfur atoms into the C-6 and C-8 positions of the octanoyl moiety bound to the lipoyl domains of lipoate-dependent enzymes, thereby converting the octanoylated domains into lipoylated derivatives. In Pyrobaculum calidifontis (strain DSM 21063 / JCM 11548 / VA1), this protein is Lipoyl synthase.